The following is a 297-amino-acid chain: uncharacterized protein (297 aa).

Residues 187 to 285 (EKLIATLHAS…GYAPSAVLKN (99 aa)) enclose the HTH araC/xylS-type domain. 2 consecutive DNA-binding regions (H-T-H motif) follow at residues 204-225 (ADMA…LRYT) and 252-275 (VGEV…KHKF).

This is an uncharacterized protein from Escherichia coli (strain K12).